A 179-amino-acid chain; its full sequence is Bifunctional protein PyrR (179 aa).

Residues 99 to 111 (VILVDDVLYTGRT) carry the PRPP-binding motif.

Belongs to the purine/pyrimidine phosphoribosyltransferase family. PyrR subfamily. As to quaternary structure, homodimer and homohexamer; in equilibrium.

The enzyme catalyses UMP + diphosphate = 5-phospho-alpha-D-ribose 1-diphosphate + uracil. Functionally, regulates transcriptional attenuation of the pyrimidine nucleotide (pyr) operon by binding in a uridine-dependent manner to specific sites on pyr mRNA. This disrupts an antiterminator hairpin in the RNA and favors formation of a downstream transcription terminator, leading to a reduced expression of downstream genes. Its function is as follows. Also displays a weak uracil phosphoribosyltransferase activity which is not physiologically significant. This chain is Bifunctional protein PyrR, found in Brevibacillus brevis (strain 47 / JCM 6285 / NBRC 100599).